A 135-amino-acid polypeptide reads, in one-letter code: Ribonuclease VapC35 (135 aa).

Positions 2 to 123 (IYLETSALVK…DNRLKEAAEA (122 aa)) constitute a PINc domain. Residues E5 and D91 each coordinate Mg(2+).

It belongs to the PINc/VapC protein family. Requires Mg(2+) as cofactor.

Toxic component of a type II toxin-antitoxin (TA) system. An RNase. Its toxic effect is neutralized by coexpression with cognate antitoxin VapB35. This chain is Ribonuclease VapC35, found in Mycobacterium tuberculosis (strain CDC 1551 / Oshkosh).